Consider the following 79-residue polypeptide: Dolichol phosphate-mannose biosynthesis regulatory protein (79 aa).

Transmembrane regions (helical) follow at residues I8 to I28 and I50 to L70.

It belongs to the DPM2 family. As to quaternary structure, component of the dolichol-phosphate mannose (DPM) synthase complex composed of dpm1, dpm2 and dpm3.

Its subcellular location is the endoplasmic reticulum membrane. It participates in protein modification; protein glycosylation. Regulates the biosynthesis of dolichol phosphate-mannose. Regulatory subunit of the dolichol-phosphate mannose (DPM) synthase complex; essential for the ER localization and stable expression of dpm1. This chain is Dolichol phosphate-mannose biosynthesis regulatory protein (dpm2-1), found in Dictyostelium discoideum (Social amoeba).